The primary structure comprises 332 residues: Phosphoenolpyruvate transferase (332 aa).

Aspartate 63 contacts 7,8-didemethyl-8-hydroxy-5-deazariboflavin.

This sequence belongs to the CofD family. Homodimer. Requires Mg(2+) as cofactor.

It catalyses the reaction enolpyruvoyl-2-diphospho-5'-guanosine + 7,8-didemethyl-8-hydroxy-5-deazariboflavin = dehydro coenzyme F420-0 + GMP + H(+). Its pathway is cofactor biosynthesis; coenzyme F420 biosynthesis. Catalyzes the transfer of the phosphoenolpyruvate moiety from enoylpyruvoyl-2-diphospho-5'-guanosine (EPPG) to 7,8-didemethyl-8-hydroxy-5-deazariboflavin (FO) with the formation of dehydro coenzyme F420-0 and GMP. This is Phosphoenolpyruvate transferase from Nocardia farcinica (strain IFM 10152).